The following is a 137-amino-acid chain: uncharacterized protein (137 aa).

Belongs to the ycf72 family.

The protein localises to the plastid. It localises to the chloroplast. This is an uncharacterized protein from Zea mays (Maize).